Consider the following 164-residue polypeptide: ATP synthase subunit b (164 aa).

Residues 6–26 traverse the membrane as a helical segment; the sequence is GELVGNFILVTGSVIVLLLLI.

The protein belongs to the ATPase B chain family. In terms of assembly, F-type ATPases have 2 components, F(1) - the catalytic core - and F(0) - the membrane proton channel. F(1) has five subunits: alpha(3), beta(3), gamma(1), delta(1), epsilon(1). F(0) has three main subunits: a(1), b(2) and c(10-14). The alpha and beta chains form an alternating ring which encloses part of the gamma chain. F(1) is attached to F(0) by a central stalk formed by the gamma and epsilon chains, while a peripheral stalk is formed by the delta and b chains.

Its subcellular location is the cell membrane. Its function is as follows. F(1)F(0) ATP synthase produces ATP from ADP in the presence of a proton or sodium gradient. F-type ATPases consist of two structural domains, F(1) containing the extramembraneous catalytic core and F(0) containing the membrane proton channel, linked together by a central stalk and a peripheral stalk. During catalysis, ATP synthesis in the catalytic domain of F(1) is coupled via a rotary mechanism of the central stalk subunits to proton translocation. Functionally, component of the F(0) channel, it forms part of the peripheral stalk, linking F(1) to F(0). This chain is ATP synthase subunit b, found in Streptococcus pyogenes serotype M6 (strain ATCC BAA-946 / MGAS10394).